Here is an 802-residue protein sequence, read N- to C-terminus: Cullin-4 (802 aa).

Low complexity-rich tracts occupy residues 1 to 33 (MNFN…NNNN) and 656 to 676 (STSS…ASGS). Disordered stretches follow at residues 1-43 (MNFN…SLAG) and 656-686 (STSS…GGAT). A Cullin neddylation domain is found at 734–794 (DRQYQVDAAI…KEYLCRDPEN (61 aa)). Lys748 participates in a covalent cross-link: Glycyl lysine isopeptide (Lys-Gly) (interchain with G-Cter in NEDD8).

The protein belongs to the cullin family. Neddylated. Deneddylated via its interaction with the COP9 signalosome (CSN) complex.

It functions in the pathway protein modification; protein ubiquitination. Functionally, probable core component of cullin-based SCF-like E3 ubiquitin-protein ligase complexes which mediate the ubiquitination and subsequent proteasomal degradation of target proteins. The E3 ubiquitin-protein ligase activity of the complex is dependent on the neddylation of the cullin subunit. The sequence is that of Cullin-4 (culD) from Dictyostelium discoideum (Social amoeba).